The following is a 172-amino-acid chain: Bifunctional protein PyrR (172 aa).

The short motif at 90-102 (LVLVDDVLMSGRT) is the PRPP-binding element.

This sequence belongs to the purine/pyrimidine phosphoribosyltransferase family. PyrR subfamily.

The enzyme catalyses UMP + diphosphate = 5-phospho-alpha-D-ribose 1-diphosphate + uracil. In terms of biological role, regulates the transcription of the pyrimidine nucleotide (pyr) operon in response to exogenous pyrimidines. Functionally, also displays a weak uracil phosphoribosyltransferase activity which is not physiologically significant. This chain is Bifunctional protein PyrR, found in Pseudomonas putida (strain GB-1).